Consider the following 226-residue polypeptide: ADP-ribosylation factor-like protein 6-interacting protein 6 (226 aa).

A disordered region spans residues 1–49; sequence MSFVESWRFAGARRRRQVTPGPATRPGYSDYTQGDSWGEGEGDEDEGCD. Residues serine 2 and serine 36 each carry the phosphoserine modification. A compositionally biased stretch (acidic residues) spans 38–48; it reads GEGEGDEDEGC. A phosphoserine mark is found at serine 60, serine 65, and serine 80. Helical transmembrane passes span 111 to 131, 150 to 170, and 205 to 225; these read ILCS…AYMI, LLGF…CCSF, and MGYS…AWCL.

This sequence belongs to the ARL6IP6 family.

It is found in the nucleus inner membrane. In Mus musculus (Mouse), this protein is ADP-ribosylation factor-like protein 6-interacting protein 6 (Arl6ip6).